A 628-amino-acid polypeptide reads, in one-letter code: Chaperone protein DnaK (628 aa).

The residue at position 195 (T195) is a Phosphothreonine; by autocatalysis. The segment at 545–628 (QLEENEGAAQ…VIDADFKAAE (84 aa)) is disordered. The span at 555–591 (DAKDALKAAADEAEEAVRSEDDARIESAQKRLEEELR) shows a compositional bias: basic and acidic residues. A compositionally biased stretch (low complexity) spans 596–612 (AQQAAGQGQPQGAQAQG). The span at 614–628 (KADDDVIDADFKAAE) shows a compositional bias: basic and acidic residues.

The protein belongs to the heat shock protein 70 family.

Acts as a chaperone. This is Chaperone protein DnaK from Deinococcus deserti (strain DSM 17065 / CIP 109153 / LMG 22923 / VCD115).